We begin with the raw amino-acid sequence, 231 residues long: Large ribosomal subunit protein uL1 (231 aa).

Belongs to the universal ribosomal protein uL1 family. As to quaternary structure, part of the 50S ribosomal subunit.

Binds directly to 23S rRNA. The L1 stalk is quite mobile in the ribosome, and is involved in E site tRNA release. Its function is as follows. Protein L1 is also a translational repressor protein, it controls the translation of the L11 operon by binding to its mRNA. This Alcanivorax borkumensis (strain ATCC 700651 / DSM 11573 / NCIMB 13689 / SK2) protein is Large ribosomal subunit protein uL1.